Reading from the N-terminus, the 215-residue chain is Peptidyl-tRNA hydrolase (215 aa).

Tyr-35 contributes to the tRNA binding site. His-40 functions as the Proton acceptor in the catalytic mechanism. TRNA-binding residues include Tyr-86, Asn-88, and Asn-134.

The protein belongs to the PTH family. In terms of assembly, monomer.

It is found in the cytoplasm. The enzyme catalyses an N-acyl-L-alpha-aminoacyl-tRNA + H2O = an N-acyl-L-amino acid + a tRNA + H(+). Hydrolyzes ribosome-free peptidyl-tRNAs (with 1 or more amino acids incorporated), which drop off the ribosome during protein synthesis, or as a result of ribosome stalling. In terms of biological role, catalyzes the release of premature peptidyl moieties from peptidyl-tRNA molecules trapped in stalled 50S ribosomal subunits, and thus maintains levels of free tRNAs and 50S ribosomes. The polypeptide is Peptidyl-tRNA hydrolase (Bordetella parapertussis (strain 12822 / ATCC BAA-587 / NCTC 13253)).